A 381-amino-acid chain; its full sequence is Putative steryl acetyl hydrolase mug81 (381 aa).

Over 1–9 the chain is Cytoplasmic; sequence MISLSLLYR. Residues 10–30 form a helical; Signal-anchor for type II membrane protein membrane-spanning segment; sequence ILTLPIILVGTTILYFTIGTN. Residues 31–381 lie on the Lumenal side of the membrane; sequence FPHDELRHNL…YTFLRETFEE (351 aa). The Involved in the stabilization of the negatively charged intermediate by the formation of the oxyanion hole signature appears at 125-127; sequence HGG. Residue Asn193 is glycosylated (N-linked (GlcNAc...) asparagine). Ser200 is an active-site residue.

It belongs to the 'GDXG' lipolytic enzyme family.

It localises to the cytoplasm. Its subcellular location is the endoplasmic reticulum membrane. Functionally, required for the deacetylation of acetylated sterols. Has a role in meiosis. This chain is Putative steryl acetyl hydrolase mug81 (mug180), found in Schizosaccharomyces pombe (strain 972 / ATCC 24843) (Fission yeast).